The primary structure comprises 277 residues: Phosphatidylglycerol--prolipoprotein diacylglyceryl transferase (277 aa).

Transmembrane regions (helical) follow at residues 22 to 42, 51 to 71, 89 to 109, and 116 to 136; these read WYGV…LSEA, IIVD…RIYY, IWHG…TAII, and ISFW…QAIG. Arg137 is a binding site for a 1,2-diacyl-sn-glycero-3-phospho-(1'-sn-glycerol). The next 3 helical transmembrane spans lie at 177–197, 205–225, and 235–255; these read QPTF…LLII, GELF…IEGM, and FRVS…LIIY.

Belongs to the Lgt family.

The protein resides in the cell membrane. It catalyses the reaction L-cysteinyl-[prolipoprotein] + a 1,2-diacyl-sn-glycero-3-phospho-(1'-sn-glycerol) = an S-1,2-diacyl-sn-glyceryl-L-cysteinyl-[prolipoprotein] + sn-glycerol 1-phosphate + H(+). The protein operates within protein modification; lipoprotein biosynthesis (diacylglyceryl transfer). Functionally, catalyzes the transfer of the diacylglyceryl group from phosphatidylglycerol to the sulfhydryl group of the N-terminal cysteine of a prolipoprotein, the first step in the formation of mature lipoproteins. The polypeptide is Phosphatidylglycerol--prolipoprotein diacylglyceryl transferase (Listeria welshimeri serovar 6b (strain ATCC 35897 / DSM 20650 / CCUG 15529 / CIP 8149 / NCTC 11857 / SLCC 5334 / V8)).